The primary structure comprises 131 residues: MNDTVTIRTRKFMTNRLLQRKQMVIDVLHPGKATVPKTEIREKLAKMYKTTPDVIFVFGFRTHFGGGKTTGFGMIYDSLDYAKKNEPKHRLARHGLYEKKKTSRKQRKERKNRMKKVRGTAKANVGAGKKK.

At methionine 1 the chain carries N-acetylmethionine. Residue threonine 9 is modified to Phosphothreonine. Lysine 37 is covalently cross-linked (Glycyl lysine isopeptide (Lys-Gly) (interchain with G-Cter in SUMO2)). Basic and acidic residues predominate over residues 90–100; that stretch reads RLARHGLYEKK. Residues 90-131 form a disordered region; sequence RLARHGLYEKKKTSRKQRKERKNRMKKVRGTAKANVGAGKKK. Residues 101–119 show a composition bias toward basic residues; it reads KTSRKQRKERKNRMKKVRG.

The protein belongs to the eukaryotic ribosomal protein eS24 family. As to quaternary structure, component of the small ribosomal subunit. Part of the small subunit (SSU) processome, composed of more than 70 proteins and the RNA chaperone small nucleolar RNA (snoRNA) U3.

It is found in the cytoplasm. The protein localises to the nucleus. It localises to the nucleolus. Functionally, component of the small ribosomal subunit. The ribosome is a large ribonucleoprotein complex responsible for the synthesis of proteins in the cell. Required for processing of pre-rRNA and maturation of 40S ribosomal subunits. Part of the small subunit (SSU) processome, first precursor of the small eukaryotic ribosomal subunit. During the assembly of the SSU processome in the nucleolus, many ribosome biogenesis factors, an RNA chaperone and ribosomal proteins associate with the nascent pre-rRNA and work in concert to generate RNA folding, modifications, rearrangements and cleavage as well as targeted degradation of pre-ribosomal RNA by the RNA exosome. The sequence is that of Small ribosomal subunit protein eS24 (RPS24) from Pongo abelii (Sumatran orangutan).